Reading from the N-terminus, the 117-residue chain is Anti-sigma F factor antagonist (117 aa).

The 114-residue stretch at His2–Val115 folds into the STAS domain. A Phosphoserine modification is found at Ser58.

It belongs to the anti-sigma-factor antagonist family. In terms of processing, phosphorylated by SpoIIAB on a serine residue.

In the phosphorylated form it could act as an anti-anti-sigma factor that counteracts SpoIIAB and thus releases sigma f from inhibition. The sequence is that of Anti-sigma F factor antagonist (spoIIAA) from Lysinibacillus sphaericus (Bacillus sphaericus).